A 341-amino-acid polypeptide reads, in one-letter code: Very-long-chain 3-oxoacyl-CoA reductase (341 aa).

Residues 15-35 form a helical membrane-spanning segment; sequence VVTAFSVIGIVFTILKFTSFA. 8 residues coordinate NADP(+): V61, D115, N142, K177, Y216, K220, V249, and S251. Residue Y216 is the Proton donor of the active site. The active-site Lowers pKa of active site Tyr is K220.

This sequence belongs to the short-chain dehydrogenases/reductases (SDR) family.

The protein resides in the endoplasmic reticulum membrane. The catalysed reaction is a very-long-chain (3R)-3-hydroxyacyl-CoA + NADP(+) = a very-long-chain 3-oxoacyl-CoA + NADPH + H(+). Its pathway is lipid metabolism; fatty acid biosynthesis. Component of the microsomal membrane bound fatty acid elongation system, which produces the 26-carbon very long-chain fatty acids (VLCFA) from palmitate. Catalyzes the reduction of the 3-ketoacyl-CoA intermediate that is formed in each cycle of fatty acid elongation. VLCFAs serve as precursors for ceramide and sphingolipids. The protein is Very-long-chain 3-oxoacyl-CoA reductase of Schizosaccharomyces pombe (strain 972 / ATCC 24843) (Fission yeast).